The primary structure comprises 274 residues: Serine acetyltransferase (274 aa).

This sequence belongs to the transferase hexapeptide repeat family.

It localises to the cytoplasm. The enzyme catalyses L-serine + acetyl-CoA = O-acetyl-L-serine + CoA. The protein operates within amino-acid biosynthesis; L-cysteine biosynthesis; L-cysteine from L-serine: step 1/2. This chain is Serine acetyltransferase (cysE), found in Buchnera aphidicola subsp. Acyrthosiphon pisum (strain APS) (Acyrthosiphon pisum symbiotic bacterium).